We begin with the raw amino-acid sequence, 434 residues long: MNIVVVGLSHKTASVDIREKVAFAPTQMEKPLRALLAIEDIAEAVIVSTCNRVEVYISTRDIAGGMARIKRFLADYHGISPEILEPHLYAHHGEAAIRHVFRVASSLDSMVVGEPQILGQIKTAYGYAAEFKTSGIILNRFLHKAFSVAKRVRTETKIASSAVSVSFAAVELARKIFGNLSDKTVMLIGAGEMCELAAKHFINNGVRGVMVTNRTYERAVKLAEEFEGKPVSFDDLFDQLHKADIVLSSTGATQFIIKPKDVEEVIRRRKLKPMFFIDIAVPRDIDPKVNDVENVYLYDMDDLQGVVASNLQQRAEEAKKAEAIIDEEIGQFHKWLSNLEVTPTIVALRSKFEETRKAELEKTLASWKDLPPDGAKRLEALTTAIVNKLLHPPTATLKRVGQGGRTDLYVDALRTLFELQTGESEAEELGELEE.

Substrate contacts are provided by residues 49–52, S109, 114–116, and Q120; these read TCNR and EPQ. C50 (nucleophile) is an active-site residue. 189–194 serves as a coordination point for NADP(+); sequence GAGEMC.

The protein belongs to the glutamyl-tRNA reductase family. As to quaternary structure, homodimer.

The enzyme catalyses (S)-4-amino-5-oxopentanoate + tRNA(Glu) + NADP(+) = L-glutamyl-tRNA(Glu) + NADPH + H(+). It participates in porphyrin-containing compound metabolism; protoporphyrin-IX biosynthesis; 5-aminolevulinate from L-glutamyl-tRNA(Glu): step 1/2. In terms of biological role, catalyzes the NADPH-dependent reduction of glutamyl-tRNA(Glu) to glutamate 1-semialdehyde (GSA). This Geobacter metallireducens (strain ATCC 53774 / DSM 7210 / GS-15) protein is Glutamyl-tRNA reductase.